A 458-amino-acid chain; its full sequence is Alpha-2C adrenergic receptor (458 aa).

Residues 1–51 are Extracellular-facing; it reads MASPALAAALAAAAAEGPNGSDAGEWGSGGGANASGTDWVPPPGQYSAGAV. Residues N19 and N33 are each glycosylated (N-linked (GlcNAc...) asparagine). A helical membrane pass occupies residues 52–76; that stretch reads AGLAAVVGFLIVFTVVGNVLVVIAV. The Cytoplasmic portion of the chain corresponds to 77-88; sequence LTSRALRAPQNL. Residues 89 to 114 form a helical membrane-spanning segment; sequence FLVSLASADILVATLVMPFSLANELM. The Extracellular segment spans residues 115–124; sequence AYWYFGQVWC. Residues C124 and C202 are joined by a disulfide bond. A helical transmembrane segment spans residues 125–147; that stretch reads GVYLALDVLFCTSSIVHLCAISL. At 148-168 the chain is on the cytoplasmic side; that stretch reads DRYWSVTQAVEYNLKRTPRRV. A helical transmembrane segment spans residues 169–191; the sequence is KATIVAVWLISAVISFPPLVSFY. Residues 192–207 are Extracellular-facing; it reads RRPDGAAYPQCGLNDE. The helical transmembrane segment at 208–231 threads the bilayer; that stretch reads TWYILSSCIGSFFAPCLIMGLVYA. Residues 232–379 are Cytoplasmic-facing; it reads RIYRVAKLRT…QAREKRFTFV (148 aa). The tract at residues 245 to 343 is disordered; the sequence is SEKRGPAGPD…SPGPGGRLSR (99 aa). A compositionally biased stretch (basic residues) spans 291-303; the sequence is RRRRRGALRRGGR. Residues 380-403 traverse the membrane as a helical segment; it reads LAVVMGVFVLCWFPFFFSYSLYGI. At 404 to 416 the chain is on the extracellular side; that stretch reads CREACQLPEPLFK. Residues 417–437 form a helical membrane-spanning segment; it reads FFFWIGYCNSSLNPVIYTVFN. The Cytoplasmic portion of the chain corresponds to 438–458; the sequence is QDFRRSFKHILFRRRRRGFRQ.

It belongs to the G-protein coupled receptor 1 family. Adrenergic receptor subfamily. ADRA2C sub-subfamily.

Its subcellular location is the cell membrane. Alpha-2 adrenergic receptors mediate the catecholamine-induced inhibition of adenylate cyclase through the action of G proteins. The protein is Alpha-2C adrenergic receptor (Adra2c) of Mus musculus (Mouse).